Here is an 801-residue protein sequence, read N- to C-terminus: Elongation factor G, mitochondrial (801 aa).

The N-terminal 65 residues, 1-65 (MRVQSLLRAQ…QKIQNQRRWQ (65 aa)), are a transit peptide targeting the mitochondrion. The tr-type G domain maps to 100–387 (SRVRNIGIAA…AVCDYLPNPS (288 aa)). GTP-binding positions include 109–116 (AHIDSGKT), 185–189 (DTPGH), and 239–242 (NKMD).

The protein belongs to the TRAFAC class translation factor GTPase superfamily. Classic translation factor GTPase family. EF-G/EF-2 subfamily.

Its subcellular location is the mitochondrion. It participates in protein biosynthesis; polypeptide chain elongation. Mitochondrial GTPase that catalyzes the GTP-dependent ribosomal translocation step during translation elongation. During this step, the ribosome changes from the pre-translocational (PRE) to the post-translocational (POST) state as the newly formed A-site-bound peptidyl-tRNA and P-site-bound deacylated tRNA move to the P and E sites, respectively. Catalyzes the coordinated movement of the two tRNA molecules, the mRNA and conformational changes in the ribosome. The sequence is that of Elongation factor G, mitochondrial (mef1) from Pyrenophora tritici-repentis (strain Pt-1C-BFP) (Wheat tan spot fungus).